We begin with the raw amino-acid sequence, 635 residues long: MIKITLKDGKVMEIEEGIKISDIAMKISPALYKKALAAKIDGETVDLMTELHKDSSLEILTFEDEMGKWALRHTGAHILAQAVKRLYPEVKLAIGPAIDTGFYYDFEADFTFTPEMLEKIEAEIKKIIKENHKLERFELPREEAINLMKEKNEDYKVELIEDLPEGEVISFYKQGDFTDLCAGPHVPSTGKVKSVKLLSLAGAYWRGDEKNKMLQRIYGTAFTKKSELDEYLNMIEEAKKRDHRKLGKELDLFSIHEEGPGFPFFHPKGMIVRNILESFWREKHTKAGYQEIRTPLILNEALWHQSGHWDHYKENMYFTNIDDGDYAIKPMNCPGGILVYKSSMHSYRDLPLRLSELGIVHRHELSGALHGLMRVRCFTQDDAHLYMTKEQIKEEVIGIIKLIDEFYKLFGFEYFVELSTRPEDSMGSDEDWEIATNGLREALDSIGKEYRVNEGDGAFYGPKIDFHLKDCIGRTWQCGTIQLDFQMPERFDLSYIGADGEKHRPVMVHRTIYGSVERFIGILIEQYAGAFPTWLAPVQVKLMNITDSQYDYLKKVEETLKENNIRVEIDTRNEKIGYKIREAQLQKVPYMLILGDKEVEAGKVAVRSRKDGDLGAISLEEFIEKIKNEIKNKTN.

The 61-residue stretch at 1–61 folds into the TGS domain; the sequence is MIKITLKDGK…HKDSSLEILT (61 aa). Residues 242–532 form a catalytic region; the sequence is DHRKLGKELD…LIEQYAGAFP (291 aa). Positions 333, 384, and 509 each coordinate Zn(2+).

It belongs to the class-II aminoacyl-tRNA synthetase family. As to quaternary structure, homodimer. It depends on Zn(2+) as a cofactor.

It localises to the cytoplasm. It carries out the reaction tRNA(Thr) + L-threonine + ATP = L-threonyl-tRNA(Thr) + AMP + diphosphate + H(+). Its function is as follows. Catalyzes the attachment of threonine to tRNA(Thr) in a two-step reaction: L-threonine is first activated by ATP to form Thr-AMP and then transferred to the acceptor end of tRNA(Thr). Also edits incorrectly charged L-seryl-tRNA(Thr). The protein is Threonine--tRNA ligase of Clostridium botulinum (strain Langeland / NCTC 10281 / Type F).